A 505-amino-acid polypeptide reads, in one-letter code: Cytochrome P450 4Z1 (505 aa).

Residues 1-9 (MEPSWLQEL) are Cytoplasmic-facing. Residues 10–30 (MAHPFLLLILLCMSLLLFQVI) form a helical; Signal-anchor for type II membrane protein membrane-spanning segment. Residues 31-505 (RLYQRRRWMI…GIHVFAKKVC (475 aa)) lie on the Lumenal side of the membrane. C452 is a heme binding site.

This sequence belongs to the cytochrome P450 family. Heme is required as a cofactor. In terms of tissue distribution, preferentially detected in breast carcinoma tissue and mammary gland, whereas only marginal expression is found in all other tested tissues.

Its subcellular location is the endoplasmic reticulum membrane. It localises to the microsome membrane. It catalyses the reaction an organic molecule + reduced [NADPH--hemoprotein reductase] + O2 = an alcohol + oxidized [NADPH--hemoprotein reductase] + H2O + H(+). The catalysed reaction is dodecanoate + reduced [NADPH--hemoprotein reductase] + O2 = 7-hydroxydodecanoate + oxidized [NADPH--hemoprotein reductase] + H2O + H(+). The enzyme catalyses dodecanoate + reduced [NADPH--hemoprotein reductase] + O2 = 8-hydroxydodecanoate + oxidized [NADPH--hemoprotein reductase] + H2O + H(+). It carries out the reaction dodecanoate + reduced [NADPH--hemoprotein reductase] + O2 = 9-hydroxydodecanoate + oxidized [NADPH--hemoprotein reductase] + H2O + H(+). It catalyses the reaction dodecanoate + reduced [NADPH--hemoprotein reductase] + O2 = 10-hydroxydodecanoate + oxidized [NADPH--hemoprotein reductase] + H2O + H(+). The catalysed reaction is dodecanoate + reduced [NADPH--hemoprotein reductase] + O2 = 11-hydroxydodecanoate + oxidized [NADPH--hemoprotein reductase] + H2O + H(+). The enzyme catalyses tetradecanoate + reduced [NADPH--hemoprotein reductase] + O2 = 9-hydroxytetradecanoate + oxidized [NADPH--hemoprotein reductase] + H2O + H(+). It carries out the reaction tetradecanoate + reduced [NADPH--hemoprotein reductase] + O2 = 10-hydroxytetradecanoate + oxidized [NADPH--hemoprotein reductase] + H2O + H(+). It catalyses the reaction tetradecanoate + reduced [NADPH--hemoprotein reductase] + O2 = 11-hydroxytetradecanoate + oxidized [NADPH--hemoprotein reductase] + H2O + H(+). The catalysed reaction is tetradecanoate + reduced [NADPH--hemoprotein reductase] + O2 = 12-hydroxytetradecanoate + oxidized [NADPH--hemoprotein reductase] + H2O + H(+). The enzyme catalyses (5Z,8Z,11Z,14Z)-eicosatetraenoate + reduced [NADPH--hemoprotein reductase] + O2 = (14S,15R)-epoxy-(5Z,8Z,11Z)-eicosatrienoate + oxidized [NADPH--hemoprotein reductase] + H2O + H(+). Its function is as follows. A cytochrome P450 monooxygenase that catalyzes the in-chain oxidation of fatty acids. Catalyzes the hydroxylation of carbon-hydrogen bonds. Hydroxylates lauric and myristic acids predominantly at the omega-4 and omega-2 positions, respectively. Catalyzes the epoxidation of double bonds of polyunsaturated fatty acids (PUFA). Displays an absolute stereoselectivity in the epoxidation of arachidonic acid producing the 14(S),15(R)-epoxyeicosatrienoic acid (EET) enantiomer. Mechanistically, uses molecular oxygen inserting one oxygen atom into a substrate, and reducing the second into a water molecule, with two electrons provided by NADPH via cytochrome P450 reductase (CPR; NADPH-ferrihemoprotein reductase). This Homo sapiens (Human) protein is Cytochrome P450 4Z1.